Here is a 677-residue protein sequence, read N- to C-terminus: MKYVNHKTIVAFLPEIGKAGSHVTSRPNLEARVDRDSHGATKLFLSSICRVMAAKETQAERGLISSCFNLALGWQLSNAMSDDTCANPLLLGWIKEWLDQARERNTKGVTVYKKAYESMKACPLTFQHPSEAQQLNGLGPKLCERLTNKLKEYCKEHGLPMPEDPRTAKADKRKSTDGDTEGQPAKKARKPKPYAPALRSGPFALILALSSLDENSNQSMTKAELIEKAQPYCDSSFTVPSDPTKFFTAWNSMKILLTKELVYTRGHPLKKYSLTEEGWEVAKAIKKTAQKSIQNTLPFDVQSDVTADEPRTAQREDLASQRDFERQIRPGLQAHNSQRHTLDSLENTLDNSTITPIPISPDNFTVQLILDTREVRTSKDRDYISNELIRKGITPEVRALEVGDTMWVAKFHDPTFLRKYGEEGDEIMLDWIVERKRLDDLIGSIKDGRFHEQKFRLRRSGIKNVIYLIEEFAVTHHESNAAAAQKYHDMVASAIAQTQVVNGYFVKRTKNLDDTIRYLARMTFLLRNMYSAPSPPSSRTSARPSHTLALLPTRHLALSSSHISALNTLRAENPHVTYGVTFPTFCAIASKSDALTLRDIFLKMLMCTKGVSGDKALEIQRVWPTPQAFIRAFEELTDPKQKENMVADRMAHVMVGRKKIAKVLSRKIAEVWGGLPG.

Residues 156–177 (EHGLPMPEDPRTAKADKRKSTD) show a composition bias toward basic and acidic residues. The interval 156-196 (EHGLPMPEDPRTAKADKRKSTDGDTEGQPAKKARKPKPYAP) is disordered. The ERCC4 domain occupies 367–473 (QLILDTREVR…NVIYLIEEFA (107 aa)).

The protein belongs to the XPF family. As to quaternary structure, interacts with eme1. It depends on Mg(2+) as a cofactor.

Its subcellular location is the nucleus. Its function is as follows. Interacts with eme1 to form a DNA structure-specific endonuclease with substrate preference for branched DNA structures with a 5'-end at the branch nick. Typical substrates include 3'-flap structures, D-loops, replication forks and nicked Holliday junctions. May be required in mitosis for the processing of stalled or collapsed replication fork intermediates. May be required in meiosis for the repair of meiosis-specific double strand breaks subsequent to single-end invasion (SEI). This is Crossover junction endonuclease mus81 (mus81) from Emericella nidulans (strain FGSC A4 / ATCC 38163 / CBS 112.46 / NRRL 194 / M139) (Aspergillus nidulans).